We begin with the raw amino-acid sequence, 192 residues long: Peptidyl-tRNA hydrolase (192 aa).

Tyr17 provides a ligand contact to tRNA. Residue His22 is the Proton acceptor of the active site. TRNA is bound by residues Tyr68, Asn70, and Asn116.

Belongs to the PTH family. In terms of assembly, monomer.

It is found in the cytoplasm. The enzyme catalyses an N-acyl-L-alpha-aminoacyl-tRNA + H2O = an N-acyl-L-amino acid + a tRNA + H(+). Functionally, hydrolyzes ribosome-free peptidyl-tRNAs (with 1 or more amino acids incorporated), which drop off the ribosome during protein synthesis, or as a result of ribosome stalling. In terms of biological role, catalyzes the release of premature peptidyl moieties from peptidyl-tRNA molecules trapped in stalled 50S ribosomal subunits, and thus maintains levels of free tRNAs and 50S ribosomes. The chain is Peptidyl-tRNA hydrolase from Mycolicibacterium vanbaalenii (strain DSM 7251 / JCM 13017 / BCRC 16820 / KCTC 9966 / NRRL B-24157 / PYR-1) (Mycobacterium vanbaalenii).